The sequence spans 1623 residues: ATP-binding cassette sub-family A member 9 (1623 aa).

The chain crosses the membrane as a helical span at residues 31-51; sequence LLEWLFSLLLILFVYQLSSNL. Residue Asn120 is glycosylated (N-linked (GlcNAc...) asparagine). 6 consecutive transmembrane segments (helical) span residues 225 to 245, 265 to 285, 295 to 315, 329 to 349, 354 to 374, and 398 to 418; these read FFIF…SVNI, AFWL…AVLM, VVLT…LSLI, FLTG…GFTA, LPAF…TTGM, and LIMA…VLAL. An ABC transporter 1 domain is found at 481-716; that stretch reads IRIKNLKKEY…WGIGYHLSLH (236 aa). Residue 517–524 coordinates ATP; that stretch reads GHSGAGKT. The next 7 membrane-spanning stretches (helical) occupy residues 863–883, 1025–1045, 1071–1091, 1107–1127, 1135–1155, 1163–1183, and 1199–1219; these read LMTV…EHLV, AFFW…GSIS, LVDI…DSVF, IPCS…ISFI, SGIW…ATDI, LLIC…LIFS, and QLVF…FFIL. The region spanning 1287–1520 is the ABC transporter 2 domain; the sequence is LRKEYIGRTK…FGKDYLLEMK (234 aa). 1325–1332 is an ATP binding site; sequence GHNGAGKS.

The protein belongs to the ABC transporter superfamily. ABCA family. Highly expressed in heart and to lower extent in kidney, brain and spleen. Weakly expressed in developing and adult brains. Weakly expressed in the cerebellar granular layer at P14 and P21.

It is found in the membrane. Its function is as follows. Transporter that may play a role in monocyte differentiation and lipid transport and homeostasis. The polypeptide is ATP-binding cassette sub-family A member 9 (Abca9) (Mus musculus (Mouse)).